Here is a 229-residue protein sequence, read N- to C-terminus: Small ribosomal subunit protein uS3 (229 aa).

Residues 39 to 107 (VRQYLTEKLK…TAQINIAEIR (69 aa)) form the KH type-2 domain.

The protein belongs to the universal ribosomal protein uS3 family. As to quaternary structure, part of the 30S ribosomal subunit. Forms a tight complex with proteins S10 and S14.

In terms of biological role, binds the lower part of the 30S subunit head. Binds mRNA in the 70S ribosome, positioning it for translation. The protein is Small ribosomal subunit protein uS3 of Shewanella denitrificans (strain OS217 / ATCC BAA-1090 / DSM 15013).